A 321-amino-acid chain; its full sequence is Malate dehydrogenase (321 aa).

NAD(+) is bound by residues 10 to 15 (GSGMIG) and Asp34. Substrate is bound by residues Arg83 and Arg89. NAD(+)-binding positions include Asn96 and 119-121 (ITN). The substrate site is built by Asn121 and Arg152. Residue His176 is the Proton acceptor of the active site.

It belongs to the LDH/MDH superfamily. MDH type 3 family.

It carries out the reaction (S)-malate + NAD(+) = oxaloacetate + NADH + H(+). Its function is as follows. Catalyzes the reversible oxidation of malate to oxaloacetate. This is Malate dehydrogenase from Bartonella bacilliformis (strain ATCC 35685 / KC583 / Herrer 020/F12,63).